Reading from the N-terminus, the 220-residue chain is Probable chemoreceptor glutamine deamidase CheD (220 aa).

This sequence belongs to the CheD family.

It catalyses the reaction L-glutaminyl-[protein] + H2O = L-glutamyl-[protein] + NH4(+). In terms of biological role, probably deamidates glutamine residues to glutamate on methyl-accepting chemotaxis receptors (MCPs), playing an important role in chemotaxis. In Cupriavidus metallidurans (strain ATCC 43123 / DSM 2839 / NBRC 102507 / CH34) (Ralstonia metallidurans), this protein is Probable chemoreceptor glutamine deamidase CheD.